The primary structure comprises 257 residues: Probable enoyl-CoA hydratase echA8 (257 aa).

Belongs to the enoyl-CoA hydratase/isomerase family.

It carries out the reaction a (3S)-3-hydroxyacyl-CoA = a (2E)-enoyl-CoA + H2O. The enzyme catalyses a 4-saturated-(3S)-3-hydroxyacyl-CoA = a (3E)-enoyl-CoA + H2O. Its function is as follows. Could possibly oxidize fatty acids using specific components. This is Probable enoyl-CoA hydratase echA8 (echA8) from Mycobacterium leprae (strain TN).